The primary structure comprises 1010 residues: Importin-8 (1010 aa).

In terms of domain architecture, Importin N-terminal spans 22-102 (AETELNQSYK…RDNIVEGIIR (81 aa)). The span at 886–895 (NHSKAEKVDI) shows a compositional bias: basic and acidic residues. The tract at residues 886–932 (NHSKAEKVDIEENEEISSEEEEETSVSAQAMQSQIGRSEEEDDDDWD) is disordered. Residues 896–909 (EENEEISSEEEEET) show a composition bias toward acidic residues. Phosphoserine occurs at positions 902 and 903. The span at 910–921 (SVSAQAMQSQIG) shows a compositional bias: polar residues.

The protein belongs to the importin beta family. In terms of assembly, forms a heterodimer with KPNB1. Interacts with SRP19. Interacts with RPL23A. Binds directly to nuclear pore complexes. Interacts with LRPPRC; the interaction occurs when LRPPRC is in its RNA-free form and promotes import of LRPPRC to the nucleus to allow for EIF4E-mediated export of mRNAS from the nucleus to the cytoplasm.

It is found in the cytoplasm. The protein resides in the nucleus. In terms of biological role, involved in nuclear protein import, either by acting as autonomous nuclear transport receptor or as an adapter-like protein in association with the importin-beta subunit KPNB1. Acting autonomously, may serve as receptor for nuclear localization signals (NLS) and promote translocation of import substrates through the nuclear pore complex (NPC) by an energy requiring, Ran-dependent mechanism. At the nucleoplasmic side of the NPC, Ran binds to importin, the importin/substrate complex dissociates and importin is re-exported from the nucleus to the cytoplasm where GTP hydrolysis releases Ran. The directionality of nuclear import is thought to be conferred by an asymmetric distribution of the GTP- and GDP-bound forms of Ran between the cytoplasm and nucleus. In vitro mediates the nuclear import of the signal recognition particle protein SRP19. May also be involved in cytoplasm-to-nucleus shuttling of a broad spectrum of other cargos, including Argonaute-microRNAs complexes, the JUN protein, RELA/NF-kappa-B p65 subunit, the translation initiation factor EIF4E and a set of receptor-activated mothers against decapentaplegic homolog (SMAD) transcription factors that play a critical role downstream of the large family of transforming growth factor beta and bone morphogenetic protein (BMP) cytokines. The polypeptide is Importin-8 (Mus musculus (Mouse)).